Consider the following 813-residue polypeptide: Ankyrin repeat domain-containing protein SOWAHB (813 aa).

Disordered regions lie at residues 142–256 (SAAP…QSLS) and 400–436 (ETCG…DSHK). A compositionally biased stretch (basic and acidic residues) spans 158-176 (MSEKARVNPSHWDTKRYYP). Pro residues predominate over residues 177–189 (EDPPVPDSLPVSP). Residues 191–202 (CTNTRQSSFTST) show a composition bias toward polar residues. Residues 208–244 (HSLSSNNLSSSFSSPESPGLVAKPYNASPSPAGSSPN) are compositionally biased toward low complexity. Positions 245-256 (IREQTPKSQSLS) are enriched in polar residues. Residues 400–416 (ETCGSEESDSGEGGDCD) show a composition bias toward acidic residues. ANK repeat units lie at residues 657–686 (TGYT…KAGI) and 696–726 (NGYT…NVKV).

It belongs to the SOWAH family.

This chain is Ankyrin repeat domain-containing protein SOWAHB (sowahb), found in Xenopus laevis (African clawed frog).